The primary structure comprises 515 residues: 4-hydroxybenzoate brominase (decarboxylating) (515 aa).

Residues Ser13, Glu32, Val40, Phe41, His51, Val102, and Gln364 each contribute to the FAD site.

The protein belongs to the FMO family. FAD is required as a cofactor.

It catalyses the reaction 2 bromide + 4-hydroxybenzoate + 2 NADPH + 2 O2 + 5 H(+) = 2,4-dibromophenol + CO2 + 2 NADP(+) + 4 H2O. The catalysed reaction is bromide + 4-hydroxybenzoate + NADPH + O2 + 2 H(+) = 3-bromo-4-hydroxybenzoate + NADP(+) + 2 H2O. The enzyme catalyses 3-bromo-4-hydroxybenzoate + bromide + NADPH + O2 + 3 H(+) = 2,4-dibromophenol + CO2 + NADP(+) + 2 H2O. It carries out the reaction 3,4-dihydroxybenzoate + 2 bromide + 2 NADPH + 2 O2 + 5 H(+) = 3,5-dibromobenzene-1,2-diol + CO2 + 2 NADP(+) + 4 H2O. It catalyses the reaction 3,4-dihydroxybenzoate + bromide + NADPH + O2 + 2 H(+) = 3-bromo-4,5-dihydroxybenzoate + NADP(+) + 2 H2O. The catalysed reaction is 3-bromo-4,5-dihydroxybenzoate + bromide + NADPH + O2 + 3 H(+) = 3,5-dibromobenzene-1,2-diol + CO2 + NADP(+) + 2 H2O. Activity is abolished in the absence of either bromide or NADPH, while a partial reduction in activity is observed upon omission of FAD. Activity does not require the addition of a flavin reductase to regenerate FADH(2) in situ. Brominase involved in the biosynthesis of polybrominated aromatic organic compounds. Catalyzes the bromination of 4-hydroxybenzoate (4-HBA) to 3-bromo-4-hydroxybenzoate, followed by bromination and decarboxylation of 3-bromo-4-hydroxybenzoate to 2,4-dibromophenol. Can also use 3,4-dihydroxybenzoate, with lower efficiency, forming 3-bromo-4,5-dihydroxybenzoate and 3,5-dibromobenzene-1,2-diol. Can utilize iodide in vivo leading to the formation of iodophenols, but cannot use chloride. This Pseudoalteromonas luteoviolacea (strain 2ta16) protein is 4-hydroxybenzoate brominase (decarboxylating).